The chain runs to 143 residues: Transcriptional regulator MraZ (143 aa).

SpoVT-AbrB domains lie at 5 to 47 (TYTP…PKEE) and 76 to 119 (TDEQ…DKQA).

This sequence belongs to the MraZ family. In terms of assembly, forms oligomers.

The protein localises to the cytoplasm. It is found in the nucleoid. The polypeptide is Transcriptional regulator MraZ (Nocardia farcinica (strain IFM 10152)).